A 318-amino-acid polypeptide reads, in one-letter code: Ribosomal RNA small subunit methyltransferase H (318 aa).

Residues 37–39 (GGH), D57, F83, D104, and Q111 contribute to the S-adenosyl-L-methionine site.

This sequence belongs to the methyltransferase superfamily. RsmH family.

The protein resides in the cytoplasm. It catalyses the reaction cytidine(1402) in 16S rRNA + S-adenosyl-L-methionine = N(4)-methylcytidine(1402) in 16S rRNA + S-adenosyl-L-homocysteine + H(+). Its function is as follows. Specifically methylates the N4 position of cytidine in position 1402 (C1402) of 16S rRNA. The protein is Ribosomal RNA small subunit methyltransferase H of Neisseria gonorrhoeae (strain ATCC 700825 / FA 1090).